The sequence spans 387 residues: MFSWLLRIASACLGPARRYARTRKDEDGGDNGGGVADGLLWSRDLGRHAAGEFSFAVVQANEALEDHSQVETGSAATFVGVYDGHGGADAARFISDHLFAHLIRLARESETVSEEVVRGAFSATEEGFLTLVRRTQFLKPMIAAVGSCCLVGIIWRGVLYVANLGDSRAVVGYLGRTNKITAEQITRDHNACKEEVRQELISRHPDDSQIVVLKHGVWRIKGIIQVSRTIGDAYLKRREFALDPSITRFRLSEPLRRPVLTAEPSICTRVLSLQDQFVIFASDGLWEHLTNQQAVDIVYKNPRAGIAKRLVNTALKEAARKREMRFVDLKKVEKGVRRFFHDDITVVVVYIDHELLQEKNVSVPELSVRGFVDSVGPSRISGFDAIS.

The PPM-type phosphatase domain maps to 52–351 (EFSFAVVQAN…DDITVVVVYI (300 aa)). Residues aspartate 83, glycine 84, aspartate 283, and aspartate 342 each coordinate Mn(2+).

Belongs to the PP2C family. Mg(2+) serves as cofactor. Mn(2+) is required as a cofactor.

The enzyme catalyses O-phospho-L-seryl-[protein] + H2O = L-seryl-[protein] + phosphate. It catalyses the reaction O-phospho-L-threonyl-[protein] + H2O = L-threonyl-[protein] + phosphate. In Oryza sativa subsp. japonica (Rice), this protein is Probable protein phosphatase 2C 25.